The following is a 132-amino-acid chain: ATP synthase epsilon chain, cyanelle (132 aa).

The protein belongs to the ATPase epsilon chain family. F-type ATPases have 2 components, CF(1) - the catalytic core - and CF(0) - the membrane proton channel. CF(1) has five subunits: alpha(3), beta(3), gamma(1), delta(1), epsilon(1). CF(0) has three main subunits: a, b and c.

The protein resides in the plastid. It is found in the cyanelle thylakoid membrane. Produces ATP from ADP in the presence of a proton gradient across the membrane. The chain is ATP synthase epsilon chain, cyanelle from Cyanophora paradoxa.